A 571-amino-acid chain; its full sequence is MSHQPLSCLTEKGDSPSESTGNGPPHLAHPNLDTFTPEELLQQMKELLTENHQLKEAMKLNNQAMKGRFEELSAWTEKQKEERQFFETQSKEAKERLMALSHENEKLKEELGKLKGKSERSSEDPTDDSRLPRAEAEQEKDQLRTQVTRLQAEKADLLGIVSELQLKLNSSGSSEDSFVEIRMAEGEAEGSVKEIKHSPGPTRTVSIGTSRSAEGAKNYLEHEELTVSQLLLCLREGNQKVERLEIALKEAKERVSDFEKKASNRSEIETQTEGSTEKENEEEKGPETVGSEVEALNLQVTSLFKELQEAHTKLSEAELMKKRLQEKCQALERKNSATPSELNEKQELVYTNKKLELQVESMLSEIKMEQAKTEDEKSKLAMLQLTHNKLLQEHNHALKTIEELTRKESEKVDRAVLKELSEKLELAEKALASKQLQMDEMKQTIAKQEEDLETMTVLRAQMEVYCSDFHAERAAREKIHEEKEQLALQLAVLLKENDAFEDGGRQSLMEMQSRHGARTSDPDQQAYLVQRGTEDRDWQQQRNIPIHSCPKCGEVLPDIDTLQIHVMDCII.

Disordered stretches follow at residues 1-32 (MSHQ…HPNL) and 100-144 (LSHE…DQLR). Residues 38-170 (EELLQQMKEL…VSELQLKLNS (133 aa)) are a coiled coil. Residues 58–209 (MKLNNQAMKG…GPTRTVSIGT (152 aa)) are interaction with Rab8. Basic and acidic residues predominate over residues 100 to 143 (LSHENEKLKEELGKLKGKSERSSEDPTDDSRLPRAEAEQEKDQL). The LIR signature appears at 176-181 (DSFVEI). Serine 177 is subject to Phosphoserine; by TBK1. Over residues 186-197 (GEAEGSVKEIKH) the composition is skewed to basic and acidic residues. Disordered stretches follow at residues 186–210 (GEAE…IGTS) and 255–291 (VSDF…TVGS). The residue at position 198 (serine 198) is a Phosphoserine. The segment covering 201–210 (PTRTVSIGTS) has biased composition (polar residues). Positions 233-502 (CLREGNQKVE…LLKENDAFED (270 aa)) form a coiled coil. Basic and acidic residues-rich tracts occupy residues 255–268 (VSDF…RSEI) and 275–286 (STEKENEEEKGP). At serine 336 the chain carries Phosphoserine. The interval 405–571 (TRKESEKVDR…LQIHVMDCII (167 aa)) is interaction with HD. The interaction with MYO6 stretch occupies residues 406–514 (RKESEKVDRA…RQSLMEMQSR (109 aa)). The UBAN signature appears at 468–473 (DFHAER). Serine 520 carries the post-translational modification Phosphoserine. Residues 541–571 (QRNIPIHSCPKCGEVLPDIDTLQIHVMDCII) form a CCHC NOA-type zinc finger. Residues cysteine 549, cysteine 552, histidine 565, and cysteine 569 each coordinate Zn(2+).

Self-associates. Interacts with HD. Interacts with GTF3A. Interacts with MYO6. Interacts (via UBAN) with ubiquitinated TFRC. Interacts with GTP-bound Rab8 (RAB8A and/or RAB8B). Interacts with TBC1D17. Interacts with TBK1. Interacts with TRAF3. Binds to linear ubiquitin chains. Interacts with LC3 family members MAP1LC3A, MAP1LC3B, GABARAP, GABARAPL1 and GABARAPL2; OPTN phosphorylation increases the association (at least with MAP1LC3B). Interacts with RAB12; the interaction may be indirect. Interacts with TBK1; this interaction leads to the Golgi localization of TBK1 and its subsequent activation. Interacts with palmitoyltransferase ZDHHC17/HIP14; the interaction does not lead to palmitoylation of OPTN. Interacts with CYLD. Interacts with TOM1; the interaction is indirect and is mediated by MYO6, which acts as a bridge between TOM1 and OPTN. Interacts with USP12; the interaction is independent of USP12 deubiquitinase activity and may be involved in regulation of autophagic flux. Phosphorylated by TBK1, leading to restrict bacterial proliferation in case of infection. As to expression, present in aqueous humor of the eye (at protein level).

The protein localises to the cytoplasm. Its subcellular location is the perinuclear region. It is found in the golgi apparatus. The protein resides in the trans-Golgi network. It localises to the cytoplasmic vesicle. The protein localises to the autophagosome. Its subcellular location is the recycling endosome. Functionally, plays an important role in the maintenance of the Golgi complex, in membrane trafficking, in exocytosis, through its interaction with myosin VI and Rab8. Links myosin VI to the Golgi complex and plays an important role in Golgi ribbon formation. Negatively regulates the induction of IFNB in response to RNA virus infection. Plays a neuroprotective role in the eye and optic nerve. Probably part of the TNF-alpha signaling pathway that can shift the equilibrium toward induction of cell death. May act by regulating membrane trafficking and cellular morphogenesis via a complex that contains Rab8 and huntingtin (HD). Mediates the interaction of Rab8 with the probable GTPase-activating protein TBC1D17 during Rab8-mediated endocytic trafficking, such as that of transferrin receptor (TFRC/TfR); regulates Rab8 recruitment to tubules emanating from the endocytic recycling compartment. Autophagy receptor that interacts directly with both the cargo to become degraded and an autophagy modifier of the MAP1 LC3 family; targets ubiquitin-coated bacteria (xenophagy) and appears to function in the same pathway as SQSTM1 and CALCOCO2/NDP52. This Macaca mulatta (Rhesus macaque) protein is Optineurin (OPTN).